The following is a 1701-amino-acid chain: DDB1- and CUL4-associated factor homolog 1 (1701 aa).

Polar residues predominate over residues 224-245; it reads HAEQSTSNGTSIPSIKITSVDG. Disordered regions lie at residues 224–269, 883–906, and 932–961; these read HAEQ…RRTE, DRPA…GNNF, and RPSN…TPTL. A LisH domain is found at 851–883; sequence NQAELLQLIHDHLLKSKLDSVAAMLKSEAKLPD. A compositionally biased stretch (polar residues) spans 888 to 906; the sequence is RSINTPILNKPLPSSGNNF. WD repeat units follow at residues 1086 to 1125, 1128 to 1169, 1171 to 1210, and 1215 to 1252; these read DHDE…DEGH, CHGS…QRVH, YRED…DTYL, and GLQY…HVFD. Short sequence motifs (DWD box) lie at residues 1237–1245 and 1275–1282; these read LLWDVRKKN and EVYDIRTF. Disordered stretches follow at residues 1384–1559, 1566–1585, and 1641–1701; these read IGRL…DINL, EARV…PVDP, and LVRG…DDEA. Composition is skewed to acidic residues over residues 1390–1423 and 1451–1461; these read NEDE…DEEI and DDNDTLDDLDF. Positions 1468–1479 are enriched in basic residues; the sequence is IIRRQAQRRRQR. Acidic residues-rich tracts occupy residues 1494-1512 and 1520-1543; these read EGSD…DPDF and DLVD…DDDS. The segment covering 1567–1581 has biased composition (basic and acidic residues); the sequence is ARVVENEGNNERPAR. Positions 1667–1678 are enriched in acidic residues; sequence DTDEYQSEEEEI.

This sequence belongs to the VPRBP/DCAF1 family. As to quaternary structure, component of the cul4-rbx1-ddb1-dcaf1 E3 ubiquitin-protein ligase complex.

The protein localises to the nucleus. It participates in protein modification; protein ubiquitination. In terms of biological role, component of the cul4-rbx1-ddb1-dcaf1 E3 ubiquitin-protein ligase complex, dcaf1 may function as the substrate recognition module within this complex. In Caenorhabditis elegans, this protein is DDB1- and CUL4-associated factor homolog 1 (dcaf-1).